The following is a 211-amino-acid chain: Riboflavin kinase (211 aa).

The segment at Met1–Lys85 is H-T-H motif-like. Residues Gly86–Gln211 are riboflavin kinase. CDP is bound at residue Gly95 to Ala100. Mg(2+)-binding residues include Thr122 and Asn124. The FMN site is built by Thr178 and Glu186. Val191–Arg194 serves as a coordination point for CDP.

The protein belongs to the archaeal riboflavin kinase family. The cofactor is Mg(2+).

The catalysed reaction is riboflavin + CTP = CDP + FMN + H(+). Its pathway is cofactor biosynthesis; FMN biosynthesis; FMN from riboflavin (CTP route): step 1/1. Functionally, catalyzes the CTP-dependent phosphorylation of riboflavin (vitamin B2) to form flavin mononucleotide (FMN). The protein is Riboflavin kinase (ribK) of Thermococcus kodakarensis (strain ATCC BAA-918 / JCM 12380 / KOD1) (Pyrococcus kodakaraensis (strain KOD1)).